A 316-amino-acid polypeptide reads, in one-letter code: Fe-S cluster assembly protein dre2 (316 aa).

Positions 1–128 (MAPRCLLIGT…KPEQEEPVSI (128 aa)) are N-terminal SAM-like domain. The interval 129–208 (PLKFGKNKAN…EDDLITEADM (80 aa)) is linker. The tract at residues 141 to 177 (SATNGTNGAVNPDGSVPLNLNRKRDQPEPVKPAGVGF) is disordered. Residues C218, C229, C232, and C234 each coordinate [2Fe-2S] cluster. Residues 218 to 234 (CQPKPGKRRRACKDCTC) are fe-S binding site A. [4Fe-4S] cluster-binding residues include C279, C282, C290, and C293. Short sequence motifs (cx2C motif) lie at residues 279-282 (CGNC) and 290-293 (CDGC). The fe-S binding site B stretch occupies residues 279-293 (CGNCALGDAFRCDGC).

Belongs to the anamorsin family. As to quaternary structure, monomer. Interacts with TAH18. Interacts with MIA40. [2Fe-2S] cluster is required as a cofactor. It depends on [4Fe-4S] cluster as a cofactor.

It localises to the cytoplasm. It is found in the mitochondrion intermembrane space. Component of the cytosolic iron-sulfur (Fe-S) protein assembly (CIA) machinery required for the maturation of extramitochondrial Fe-S proteins. Part of an electron transfer chain functioning in an early step of cytosolic Fe-S biogenesis, facilitating the de novo assembly of a [4Fe-4S] cluster on the scaffold complex CFD1-NBP35. Electrons are transferred to DRE2 from NADPH via the FAD- and FMN-containing protein TAH18. TAH18-DRE2 are also required for the assembly of the diferric tyrosyl radical cofactor of ribonucleotide reductase (RNR), probably by providing electrons for reduction during radical cofactor maturation in the catalytic small subunit RNR2. This is Fe-S cluster assembly protein dre2 from Pyrenophora tritici-repentis (strain Pt-1C-BFP) (Wheat tan spot fungus).